A 423-amino-acid polypeptide reads, in one-letter code: UDP-N-acetylglucosamine 1-carboxyvinyltransferase 1 (423 aa).

24–25 contributes to the phosphoenolpyruvate binding site; sequence KN. UDP-N-acetyl-alpha-D-glucosamine is bound at residue arginine 94. Cysteine 118 (proton donor) is an active-site residue. 2-(S-cysteinyl)pyruvic acid O-phosphothioketal is present on cysteine 118. UDP-N-acetyl-alpha-D-glucosamine is bound by residues 123-127, aspartate 309, and isoleucine 331; that span reads RPIDQ.

This sequence belongs to the EPSP synthase family. MurA subfamily.

It localises to the cytoplasm. It carries out the reaction phosphoenolpyruvate + UDP-N-acetyl-alpha-D-glucosamine = UDP-N-acetyl-3-O-(1-carboxyvinyl)-alpha-D-glucosamine + phosphate. It functions in the pathway cell wall biogenesis; peptidoglycan biosynthesis. Its function is as follows. Cell wall formation. Adds enolpyruvyl to UDP-N-acetylglucosamine. In Staphylococcus haemolyticus (strain JCSC1435), this protein is UDP-N-acetylglucosamine 1-carboxyvinyltransferase 1.